Reading from the N-terminus, the 356-residue chain is Caspase activity and apoptosis inhibitor 1 (356 aa).

A compositionally biased stretch (basic residues) spans 1–14 (MTGKKSSREKRRKR). 2 disordered regions span residues 1–24 (MTGK…ASLA) and 54–80 (VAGG…GSLQ). Ser-68 carries the post-translational modification Phosphoserine. At Thr-69 the chain carries Phosphothreonine. A Glycyl lysine isopeptide (Lys-Gly) (interchain with G-Cter in SUMO2) cross-link involves residue Lys-84. Residues Ser-100 and Ser-183 each carry the phosphoserine modification. The segment at 208-234 (DSTSSLRENKQPEVLESKQGKGEDSDV) is disordered. Positions 214 to 231 (RENKQPEVLESKQGKGED) are enriched in basic and acidic residues. Residues 276–306 (ENTVQSEAGQIDDLERDIEKSVNEILGLAES) are a coiled coil. Phosphoserine is present on Ser-307.

In terms of biological role, anti-apoptotic protein that modulates a caspase-10 dependent mitochondrial caspase-3/9 feedback amplification loop. The polypeptide is Caspase activity and apoptosis inhibitor 1 (Caap1) (Mus musculus (Mouse)).